The primary structure comprises 1161 residues: MSSLSADRKPPLDYGVQIRFIKDLDDAGGGFPDKSRLANGVGGVSNGTSSPSKYGVAVRVQGISGQPYVVLQDGEKGDSYGVQLKTQPQIQSAPPVVSQTSPYNTLLLGQREGARTPQGSYNPTDQPSSPDEDFGSPLRRPPGDGQAGTQGEAEPRTTERFTPSALAPKLDKKDNDAFNEAGLRKVKQNGIGSSLNGTGLNGSFPPPSSAQDEDQAPAIDTKSLAPINKLISRFGGGGGGSGDILNSEAQTRPRLDNRVRSQSADALNKPSEEASSTSPTINPYAPNTSATVPKLNSTKPSSTGSLGRDATSVAKVAAIPNFKPLAFNQSPKLFAPKEAPPAVPKKPVTPDLIKSQTTSIENGNGEDDQTKQAIYNILKEGSIEKEEAIKRKASLIHERFCGVKAPQISVTDSNMKTELEQAFGRNTQLQQQLDKSRRELQENQDQMVELRMDREGAESRLRQQEDQLAQLQEELRRTLENSPQSDSMQLDLLTVQAELSESQLLRQKLEDTLRQRERELTALKGALKDEVASHDKEMEALREQFSQDMDALRHSMETVSQSQLEIEEERQKVNASILAMEEELEGYKEQSEQWKKQFSSANQELLKAQQGKRELEEKLLAVVKQTDETDSNSVMKELQQCRDSLKKAQSELEKQKAETLKKQEELKSATRASEKRETELKAEIDRLINQLKKEKEELSKAIEKTQQPLVSDQTKDPESNLELQEANARLRERIARMTRLHSSVPDSSSSDALEEENRSLKTQLEESRRAASRLGVEKEELNRRLEEREREREALRRGKSDLEEQKRLLDRSLDKINKEMESMMGDSRQSVQVLQSQLEEFRDRSRRELQDAQRLSKDRLVELQRAQALLKTTQEEVSRVKKELLSCTEERDSTQLDKELLSSRLKNMETELQTDRSSQTDRSREIRLLEDKVKTLEIELDEEKSGAELLNERITRCREQVDQLRSELMQERSARHDLEMDKSALERQIKELKSRIADMGTQSRPSAGVTMLENKVQELEDRLRSEEREKNTIQAAQRRLDRKLKDVTATLDQERNQHAEQRDQLSLRVKALKRQLDESEGEVERLEGVRRKVLRELEEQRELQAALQAKVNAMDNELRKIQQSRRSTLGSTLSSDEEDNYSDTKSITSILTDSPLQTTSC.

Residues 1 to 403 (MSSLSADRKP…SLIHERFCGV (403 aa)) are head. Disordered stretches follow at residues 29–53 (GGFPDKSRLANGVGGVSNGTSSPSK), 79–309 (SYGV…LGRD), 649–678 (QSELEKQKAETLKKQEELKSATRASEKRET), 699–721 (SKAIEKTQQPLVSDQTKDPESNL), 739–773 (RLHSSVPDSSSSDALEEENRSLKTQLEESRRAASR), and 1123–1161 (QSRRSTLGSTLSSDEEDNYSDTKSITSILTDSPLQTTSC). The short motif at 51–65 (PSKYGVAVRVQGISG) is the ZIM element. 2 stretches are compositionally biased toward polar residues: residues 84–104 (LKTQPQIQSAPPVVSQTSPYN) and 117–129 (PQGSYNPTDQPSS). The span at 189-203 (NGIGSSLNGTGLNGS) shows a compositional bias: low complexity. A compositionally biased stretch (polar residues) spans 273–305 (EASSTSPTINPYAPNTSATVPKLNSTKPSSTGS). Residues 413-1128 (SNMKTELEQA…RKIQQSRRST (716 aa)) are a coiled coil. A compositionally biased stretch (low complexity) spans 742 to 751 (SSVPDSSSSD). The span at 755 to 773 (EENRSLKTQLEESRRAASR) shows a compositional bias: basic and acidic residues. A tail region spans residues 1122 to 1161 (QQSRRSTLGSTLSSDEEDNYSDTKSITSILTDSPLQTTSC). Low complexity predominate over residues 1124–1134 (SRRSTLGSTLS). Polar residues predominate over residues 1143-1161 (DTKSITSILTDSPLQTTSC).

It belongs to the cingulin family. As to quaternary structure, homodimer.

The protein resides in the cell junction. It localises to the tight junction. Probably plays a role in the formation and regulation of the tight junction (TJ) paracellular permeability barrier. Note=Localizes to the apical junction complex composed of tight and adherens junctions. The sequence is that of Cingulin from Danio rerio (Zebrafish).